A 67-amino-acid chain; its full sequence is Conotoxin VnMMSK-02 (67 aa).

Positions 1 to 20 are cleaved as a signal peptide; sequence MMSKLGALLTICLLLFPLTA. Positions 21–52 are excised as a propeptide; the sequence is LPLDGDQPADRPAERMQDDISSEQHPLFDKER. Gln-53 is subject to Pyrrolidone carboxylic acid. Cystine bridges form between Cys-54/Cys-66, Cys-55/Cys-62, and Cys-59/Cys-65. Position 64 is a 4-hydroxyproline (Pro-64). Residue Cys-66 is modified to Cysteine amide.

Belongs to the conotoxin M superfamily. As to expression, expressed by the venom duct.

The protein resides in the secreted. This is Conotoxin VnMMSK-02 from Conus ventricosus (Mediterranean cone).